The sequence spans 279 residues: Methyltransferase prhM (279 aa).

S-adenosyl-L-methionine is bound by residues 124 to 125 (DI) and 152 to 153 (DV).

The protein belongs to the class I-like SAM-binding methyltransferase superfamily.

It participates in secondary metabolite biosynthesis; terpenoid biosynthesis. Its function is as follows. Methyltransferase; part of the gene cluster that mediates the biosynthesis of paraherquonin, a meroterpenoid with a unique, highly congested hexacyclic molecular architecture. The first step of the pathway is the synthesis of 3,5-dimethylorsellinic acid (DMOA) by the polyketide synthase prhL. Synthesis of DMOA is followed by farnesylation by the prenyltransferase prhE, methylesterification by the methyl-transferase prhM, epoxidation of the prenyl chain by the flavin-dependent monooxygenase prhF, and cyclization of the farnesyl moiety by the terpene cyclase prhH, to yield the tetracyclic intermediate, protoaustinoid A. The short chain dehydrogenase prhI then oxidizes the C-3 alcohol group of the terpene cyclase product to transform protoaustinoid A into protoaustinoid B. The FAD-binding monooxygenase prhJ catalyzes the oxidation of protoaustinoid B into preaustinoid A which is further oxidized into preaustinoid A1 by FAD-binding monooxygenase phrK. Finally, prhA leads to berkeleydione via the berkeleyone B intermediate. PrhA is a multifunctional dioxygenase that first desaturates at C5-C6 to form berkeleyone B, followed by rearrangement of the A/B-ring to form the cycloheptadiene moiety in berkeleydione. Berkeleydione serves as the key intermediate for the biosynthesis of paraherquonin as well as many other meroterpenoids. The cytochrome P450 monooxygenases prhB, prhD, and prhN, as well as the isomerase prhC, are probably involved in the late stage of paraherquonin biosynthesis, after the production of berkeleydione. Especially prhC might be a multifunctional enzyme that catalyzes the D-ring expansion via intramolecular methoxy rearrangement, as well as the hydrolysis of the expanded D-ring. This Penicillium brasilianum protein is Methyltransferase prhM.